A 293-amino-acid chain; its full sequence is Elongation factor Ts (293 aa).

The interval 80 to 83 (TDFV) is involved in Mg(2+) ion dislocation from EF-Tu.

The protein belongs to the EF-Ts family.

It localises to the cytoplasm. Associates with the EF-Tu.GDP complex and induces the exchange of GDP to GTP. It remains bound to the aminoacyl-tRNA.EF-Tu.GTP complex up to the GTP hydrolysis stage on the ribosome. In Burkholderia cenocepacia (strain HI2424), this protein is Elongation factor Ts.